Here is a 579-residue protein sequence, read N- to C-terminus: MRNAQKPSGMPIHRYLPFQDQITVEVPDRTWPDKVITKAPRWCAVDLRDGNQALIDPMSPARKLKMFQLLVKMGYKEIEVGFPSASQTDFDFVRQLIEGGHIPDDVSIQVLTQAREHLIERTYESLVGAKQAIVHLYNSTSVLQRRVVFNQDEDGILDIALQGARLCKKYEETLTDTHITYEYSPESFTGTELEYAARVCNAIADVFEASADKQVIINLPATVEMATPNVYADSIEWMHRNLHPREGIIISLHPHNDRGTGVAAAELGYLAGADRIEGCLFGNGERTGNVDLVTLGLNMFVQGVDPMIDFSDIDEIRRTVEYCNQLPVPERSPYGGDLVFTAFSGSHQDAIKKGFEALEKDAAAAGKSVDDFTWQVPYLPIDPKDLGRSYEAVIRVNSQSGKGGVAYLLKNEHNLDLPRRAQIEFSGVIQRRTDAVGGEVSGAQLWQIFQDEYLPSDEEQAQWGRYGLGSVSTETDESGAMTMNANLRIDGVEVRRTGHGNGPIAALLDILHHDGVDVRVLDYSEHALSEGGSASAAAYVECAVGERVLWGVGIDPSTTTSSLKALISAVNRAVRDAQA.

Residues 40–314 (PRWCAVDLRD…DPMIDFSDID (275 aa)) enclose the Pyruvate carboxyltransferase domain. Residues aspartate 49, histidine 253, histidine 255, and asparagine 289 each coordinate Mg(2+). The segment at 456 to 579 (SDEEQAQWGR…VNRAVRDAQA (124 aa)) is regulatory domain.

It belongs to the alpha-IPM synthase/homocitrate synthase family. LeuA type 2 subfamily. In terms of assembly, homodimer. The cofactor is Mg(2+).

It localises to the cytoplasm. The enzyme catalyses 3-methyl-2-oxobutanoate + acetyl-CoA + H2O = (2S)-2-isopropylmalate + CoA + H(+). It participates in amino-acid biosynthesis; L-leucine biosynthesis; L-leucine from 3-methyl-2-oxobutanoate: step 1/4. In terms of biological role, catalyzes the condensation of the acetyl group of acetyl-CoA with 3-methyl-2-oxobutanoate (2-ketoisovalerate) to form 3-carboxy-3-hydroxy-4-methylpentanoate (2-isopropylmalate). This Paenarthrobacter aurescens (strain TC1) protein is 2-isopropylmalate synthase.